The sequence spans 347 residues: MSYEKELAAAKKAVTLAARLSQEVQKTLLQSQVWKKSDRSPVTAADYGSQAVVSLVLERELQPDKLSLVAEEETGDLRKNGSEAFLEDIAKLVKDTLASEESYTSSPLSTDDVLNAIDCGKSEGGCKGSHWVLDPIDGTRGFVRGEQYAVGLALLVEGKVVLGVMACPNLPLASAVCATDNSSQEDVGCLFFATTGSGTYVQSLKGNSLPQKVQVSSNENLDEAKFLESYHKPIPIHGTIAKKLGIKALPVRIDSQAKYAALSRGDAEIYLRFTLNGYRECIWDHAPGSIITTEAGGVVCDATGKSLDFSKGKYLAHKTGIIVTTKKLKPWILKAVRESIEEENLYF.

The active-site Proton acceptor is Asp-46. The Mg(2+) site is built by Glu-71, Asp-134, Ile-136, and Asp-137. Thr-139 acts as the Proton acceptor in catalysis. Adenosine 3',5'-bisphosphate-binding residues include Thr-139, Ser-255, Lys-258, Arg-272, and Asp-284. AMP-binding residues include Ser-255, Lys-258, Arg-272, and Asp-284. Asp-284 contributes to the Mg(2+) binding site.

Belongs to the inositol monophosphatase superfamily. It depends on Mg(2+) as a cofactor. In terms of tissue distribution, very low expression in roots, leaves, stems, flowers and siliques.

It carries out the reaction adenosine 3',5'-bisphosphate + H2O = AMP + phosphate. It catalyses the reaction 3'-phosphoadenylyl sulfate + H2O = adenosine 5'-phosphosulfate + phosphate. The enzyme catalyses 1D-myo-inositol 1,4-bisphosphate + H2O = 1D-myo-inositol 4-phosphate + phosphate. Its pathway is signal transduction; phosphatidylinositol signaling pathway. Inhibited by Li(+) (IC(50)=10 mM), Na(+) (IC(50)=200 mM) and Ca(2+) (IC(50)=0.03 mM). Functionally, phosphatase that converts adenosine 3'-phosphate 5'-phosphosulfate (PAPS) to adenosine 5'-phosphosulfate (APS) and 3'-phosphoadenosine 5'-phosphate (3'-PAP) to AMP. May regulate the flux of sulfur in the sulfur-activation pathway by converting PAPS to APS. Prevents both the toxicity of PAP on RNA processing enzymes as well as the product inhibition by PAP of sulfate conjugation. Is also able to hydrolyze inositol 1,4-bisphosphate. The protein is 3',5'-bisphosphate nucleotidase 2 of Arabidopsis thaliana (Mouse-ear cress).